Reading from the N-terminus, the 374-residue chain is WAT1-related protein At1g60050 (374 aa).

The next 10 membrane-spanning stretches (helical) occupy residues 11 to 31, 42 to 62, 82 to 102, 107 to 127, 145 to 165, 194 to 214, 228 to 248, 255 to 275, 292 to 312, and 315 to 335; these read IVPF…TILA, FVFI…YSFY, IFLL…LGLS, IVVC…SLAL, IGTL…GPFI, WALG…WNII, VVSA…AFME, ELKL…GSII, VPLF…SFFV, and LHYG…LIMW. The EamA domain occupies 26–155; sequence ALTILAKTAL…GTLICFTGAF (130 aa).

This sequence belongs to the drug/metabolite transporter (DMT) superfamily. Plant drug/metabolite exporter (P-DME) (TC 2.A.7.4) family.

Its subcellular location is the membrane. This chain is WAT1-related protein At1g60050, found in Arabidopsis thaliana (Mouse-ear cress).